Reading from the N-terminus, the 1120-residue chain is Topless-related protein 1 (1120 aa).

The region spanning 4 to 36 is the LisH domain; sequence LSRELVFLILQFLDEEKFKETVHKLEQESGFFF. Residues 34–92 form the CTLH domain; it reads FFFNMKYFEDEVHNGNWDEVEKYLSGFTKVDDNRYSMKIFFEIRKQKYLEALDRHDRPK. Disordered stretches follow at residues 210 to 235 and 283 to 307; these read ARAPSPVNNPLLGSLPKAEGFPPLGA and HPRTPPSNSAVDYPSGDSDHVSKRT. Ser214 carries the phosphoserine modification. WD repeat units follow at residues 353-393, 415-454, 460-501, 504-545, 548-591, 595-634, 639-678, 699-745, 755-794, 822-860, 863-903, 906-945, 999-1038, and 1052-1091; these read SQGS…RLVQ, EPVVSVNRVIWSPDGSLFGVAYSRHIVQLYSYHGGEDMRQ, AHVG…KRYT, GHEA…SRVD, APGR…VKRT, FHKRSLGVVQFDTTKNRYLAAGDDFSIKFWDMDTIQLLTA, GGLQASPRIRFNKEGSLLAVSANDNMIKVMANSDGLRLLH, ERPA…EPSQ, MRVTKISRLIFTNSGNAILALASNAIHLLWKWQRNDRNAT, NPEEAVPCFALSKNDSYVMSASGGKISLFNMMTFKTMAT, PPPP…VKSK, GHSKRITGLAFSNVLNVLVSSGADAQLCVWNTDGWEKQKS, ESAAPITHATFSCDSQLIYTSFMDATICVFSSANLRLRCR, and SNVHPLVIAAHPQESNMFAVGLSDGGVHIFEPLESEGKWG. The tract at residues 1087 to 1120 is disordered; that stretch reads EGKWGVAPPPENGSASAVTATPSVGASASDQPQR. Residues 1099–1120 are compositionally biased toward polar residues; the sequence is GSASAVTATPSVGASASDQPQR.

Tetramer. Interacts with SNC1 (via TIR domain) and HDA19. Interacts with SPL (via EAR motif). Interacts with SPEAR3/TIE1. Binds to and corepresses GAF1/IDD2. As to expression, highly expressed in stamen primordium, microsporocyte, ovule primordium and megasporocyte during sporogenesis.

Its subcellular location is the nucleus. In terms of biological role, transcriptional corepressor. Activates TIR-NB-LRR R protein-mediated immune responses through repression of negative regulators such as CNGC2/DND1. Negative regulator of jasmonate responses. The sequence is that of Topless-related protein 1 (TPR1) from Arabidopsis thaliana (Mouse-ear cress).